Consider the following 201-residue polypeptide: FMN-dependent NADH:quinone oxidoreductase (201 aa).

Methionine 92–leucine 95 lines the FMN pocket.

The protein belongs to the azoreductase type 1 family. In terms of assembly, homodimer. FMN serves as cofactor.

The catalysed reaction is 2 a quinone + NADH + H(+) = 2 a 1,4-benzosemiquinone + NAD(+). The enzyme catalyses N,N-dimethyl-1,4-phenylenediamine + anthranilate + 2 NAD(+) = 2-(4-dimethylaminophenyl)diazenylbenzoate + 2 NADH + 2 H(+). In terms of biological role, quinone reductase that provides resistance to thiol-specific stress caused by electrophilic quinones. Functionally, also exhibits azoreductase activity. Catalyzes the reductive cleavage of the azo bond in aromatic azo compounds to the corresponding amines. The chain is FMN-dependent NADH:quinone oxidoreductase from Caldicellulosiruptor bescii (strain ATCC BAA-1888 / DSM 6725 / KCTC 15123 / Z-1320) (Anaerocellum thermophilum).